Here is a 481-residue protein sequence, read N- to C-terminus: MAVERKKWSENFSEWYNELIETAGIQDKRYPVKGMNVWLPYGLKIMRNIERFIHAEMERTGHDEVLFPALIPETEFQKEAEHIKGFEGEVYWVTHAGLEPLDVRLILRPTSETAMYSMFSLWIRSHADLPFKIYQIVNVYRYETKHTRPLIRVREISRFFEAHTAHDSYEDAERQIKEDLEIFDNLARFLALPYIISKRPEWDKFPGAYYSLGAEVMMPDGRTLQIGTMHNYRQNFAKAYNIQYETETGDHEYVHQTTFGMSERLLAAVIAIHGDDRGMVLPPTIAPIQVVIVPIPKKDSEADVFAYAREIAEELRTAGIRVHVDERDIRPGRKYYDWELKGVPLRIEVGPRDVEGKKAVLARRDTLEKITVERDNIVEEVRKTLDAIHENLYQRAKEFLESHIKRVDTIEEAKAVFEDRRGIVEIPWCGEEECGLRMEEELDAKMLGIPYPEEKAKAPEGKKCPVCGREAKFIARFARTY.

It belongs to the class-II aminoacyl-tRNA synthetase family. ProS type 3 subfamily. Homodimer.

The protein resides in the cytoplasm. It catalyses the reaction tRNA(Pro) + L-proline + ATP = L-prolyl-tRNA(Pro) + AMP + diphosphate. Its function is as follows. Catalyzes the attachment of proline to tRNA(Pro) in a two-step reaction: proline is first activated by ATP to form Pro-AMP and then transferred to the acceptor end of tRNA(Pro). The protein is Proline--tRNA ligase of Thermococcus kodakarensis (strain ATCC BAA-918 / JCM 12380 / KOD1) (Pyrococcus kodakaraensis (strain KOD1)).